The sequence spans 486 residues: Cephamycin export protein CmcT (486 aa).

14 helical membrane passes run 24-44 (VLACTAHFLVVFDTSVITVAL), 56-76 (ASLQWVVNSYTLAFAGLLLFG), 88-108 (VFLGGLAVFTLTSLIGGLATS), 121-141 (AGAAVLAPLAVTMLTTSFAEG), 153-173 (AVALVGGASGNLLGGVFTEFL), 178-198 (VLLVNVPIGIPVLFLAARVLA), 210-230 (LDLPGAVLATAGLTLLTLGVS), 241-261 (AVAVPLAGGLLALLAFVVVEA), 284-304 (LAMLLAGASQVPVWFFLTLSM), 317-337 (LGFVPHALVMLVVGLRVVPWL), 345-365 (VLIAAGAAIGALGFWWQSLLT), 369-389 (AYLGGILGPAVLISIGGGLVG), 418-438 (FGGAFGLAVLLTVTGSGTSGS), and 450-470 (FVGIAVFMLAIAVLTPVLPAL).

The protein belongs to the major facilitator superfamily.

It is found in the cell membrane. Its function is as follows. Involved in cephamycin export. This Amycolatopsis lactamdurans (Nocardia lactamdurans) protein is Cephamycin export protein CmcT (cmcT).